Here is a 332-residue protein sequence, read N- to C-terminus: 4-hydroxy-3-methylbut-2-enyl diphosphate reductase (332 aa).

Cys-34 contributes to the [4Fe-4S] cluster binding site. (2E)-4-hydroxy-3-methylbut-2-enyl diphosphate is bound by residues His-63 and His-96. Residues His-63 and His-96 each contribute to the dimethylallyl diphosphate site. His-63 and His-96 together coordinate isopentenyl diphosphate. Residue Cys-118 participates in [4Fe-4S] cluster binding. His-146 is a binding site for (2E)-4-hydroxy-3-methylbut-2-enyl diphosphate. Dimethylallyl diphosphate is bound at residue His-146. His-146 lines the isopentenyl diphosphate pocket. Glu-148 serves as the catalytic Proton donor. (2E)-4-hydroxy-3-methylbut-2-enyl diphosphate is bound at residue Thr-186. Cys-216 is a binding site for [4Fe-4S] cluster. (2E)-4-hydroxy-3-methylbut-2-enyl diphosphate-binding residues include Ser-244, Ser-245, Asn-246, and Ser-289. Positions 244, 245, 246, and 289 each coordinate dimethylallyl diphosphate. Isopentenyl diphosphate is bound by residues Ser-244, Ser-245, Asn-246, and Ser-289.

The protein belongs to the IspH family. Requires [4Fe-4S] cluster as cofactor.

It carries out the reaction isopentenyl diphosphate + 2 oxidized [2Fe-2S]-[ferredoxin] + H2O = (2E)-4-hydroxy-3-methylbut-2-enyl diphosphate + 2 reduced [2Fe-2S]-[ferredoxin] + 2 H(+). The catalysed reaction is dimethylallyl diphosphate + 2 oxidized [2Fe-2S]-[ferredoxin] + H2O = (2E)-4-hydroxy-3-methylbut-2-enyl diphosphate + 2 reduced [2Fe-2S]-[ferredoxin] + 2 H(+). Its pathway is isoprenoid biosynthesis; dimethylallyl diphosphate biosynthesis; dimethylallyl diphosphate from (2E)-4-hydroxy-3-methylbutenyl diphosphate: step 1/1. It functions in the pathway isoprenoid biosynthesis; isopentenyl diphosphate biosynthesis via DXP pathway; isopentenyl diphosphate from 1-deoxy-D-xylulose 5-phosphate: step 6/6. Catalyzes the conversion of 1-hydroxy-2-methyl-2-(E)-butenyl 4-diphosphate (HMBPP) into a mixture of isopentenyl diphosphate (IPP) and dimethylallyl diphosphate (DMAPP). Acts in the terminal step of the DOXP/MEP pathway for isoprenoid precursor biosynthesis. This is 4-hydroxy-3-methylbut-2-enyl diphosphate reductase from Mycobacterium ulcerans (strain Agy99).